We begin with the raw amino-acid sequence, 378 residues long: Rhodopsin (378 aa).

Over 1–53 (MMSIASGPSHAAYTWASQGGGFGNQTVVDKVPPEMLHMVDAHWYQFPPMNPLW) the chain is Extracellular. N-linked (GlcNAc...) asparagine glycosylation occurs at Asn-24. Residues 54 to 78 (HALLGFVIGVLGVISVIGNGMVIYI) traverse the membrane as a helical segment. Over 79–90 (FTTTKSLRTPSN) the chain is Cytoplasmic. Residues 91–115 (LLVVNLAISDFLMMLCMSPAMVINC) form a helical membrane-spanning segment. The Extracellular portion of the chain corresponds to 116–130 (YYETWVLGPLFCELY). A disulfide bridge links Cys-127 with Cys-204. The helical transmembrane segment at 131–150 (GLAGSLFGCASIWTMTMIAF) threads the bilayer. At 151 to 169 (DRYNVIVKGLSAKPMTING) the chain is on the cytoplasmic side. A helical membrane pass occupies residues 170–193 (ALIRILTIWFFTLAWTIAPMFGWN). Over 194-217 (RYVPEGNMTACGTDYLTKDLFSRS) the chain is Extracellular. A glycan (N-linked (GlcNAc...) asparagine) is linked at Asn-200. A helical transmembrane segment spans residues 218-245 (YILIYSIFVYFTPLFLIIYSYFFIIQAV). The Cytoplasmic segment spans residues 246–280 (AAHEKNMREQAKKMNVASLRSAENQSTSAECKLAK). A helical transmembrane segment spans residues 281-304 (VALMTISLWFMAWTPYLVINYSGI). Residues 305-311 (FETTKIS) lie on the Extracellular side of the membrane. The helical transmembrane segment at 312–336 (PLFTIWGSLFAKANAVYNPIVYGIS) threads the bilayer. Lys-323 is modified (N6-(retinylidene)lysine). Residues 337-378 (HPKYRAALFQKFPSLACTTEPTGADTMSTTTTVTEGNEKPAA) are Cytoplasmic-facing.

It belongs to the G-protein coupled receptor 1 family. Opsin subfamily. Post-translationally, phosphorylated on some or all of the serine and threonine residues present in the C-terminal region.

It is found in the membrane. Visual pigments are the light-absorbing molecules that mediate vision. They consist of an apoprotein, opsin, covalently linked to cis-retinal. This Camponotus atriceps (Florida carpenter ant) protein is Rhodopsin.